Here is a 394-residue protein sequence, read N- to C-terminus: Quinolinate synthase (394 aa).

Histidine 57 and serine 74 together coordinate iminosuccinate. Cysteine 121 is a binding site for [4Fe-4S] cluster. Residues 153–155 (YMN) and serine 174 contribute to the iminosuccinate site. Residue cysteine 243 coordinates [4Fe-4S] cluster. Iminosuccinate contacts are provided by residues 269–271 (HPE) and threonine 286. Cysteine 333 provides a ligand contact to [4Fe-4S] cluster.

Belongs to the quinolinate synthase family. Type 3 subfamily. It depends on [4Fe-4S] cluster as a cofactor.

Its subcellular location is the cytoplasm. It catalyses the reaction iminosuccinate + dihydroxyacetone phosphate = quinolinate + phosphate + 2 H2O + H(+). It functions in the pathway cofactor biosynthesis; NAD(+) biosynthesis; quinolinate from iminoaspartate: step 1/1. In terms of biological role, catalyzes the condensation of iminoaspartate with dihydroxyacetone phosphate to form quinolinate. This is Quinolinate synthase from Corynebacterium glutamicum (strain ATCC 13032 / DSM 20300 / JCM 1318 / BCRC 11384 / CCUG 27702 / LMG 3730 / NBRC 12168 / NCIMB 10025 / NRRL B-2784 / 534).